The following is a 104-amino-acid chain: Seminal ribonuclease (104 aa).

4 disulfides stabilise this stretch: C12/C70, C26/C81, C44/C96, and C51/C58. Substrate contacts are provided by residues 27-31 (KPVNT), K52, and R71.

It belongs to the pancreatic ribonuclease family. Homodimer; disulfide-linked.

The protein localises to the secreted. The enzyme catalyses an [RNA] containing cytidine + H2O = an [RNA]-3'-cytidine-3'-phosphate + a 5'-hydroxy-ribonucleotide-3'-[RNA].. The catalysed reaction is an [RNA] containing uridine + H2O = an [RNA]-3'-uridine-3'-phosphate + a 5'-hydroxy-ribonucleotide-3'-[RNA].. The chain is Seminal ribonuclease (SRN) from Saiga tatarica (Saiga antelope).